A 348-amino-acid polypeptide reads, in one-letter code: MVRTINETFLKACRGERTEYVPAWYMRQAGRSQPEYRKIKEKYSLFEITHNPELCAYVTKLPVDQYNVDAAILYKDIMSPLPAIGVDVEIKSGIGPVIDSPIRSLQDVEKLGEINPEDDVPYILDTIRLLTTEMLDVPLIGFSGAPFTLASYMIEGGPSRNYHNTKAFMYAEPKAWFALMDKLADMVITYLKAQINAGVKAVQIFDSWVGAVNVADYRIFIKPAMERIFAEVRPMGVPMIMHGVGAAHLVNEWHDLPLDVVGLDWRLPIEEARARGVHRAVQGNMDPSFLLAPWPVIEEHVKGILDQGMKQPGYIFNLGHGVFPEVNPDTLKRLTTFIHEYSKEQLAK.

Substrate is bound by residues 27-31 (RQAGR), Phe46, Asp76, Tyr152, Ser207, and His320.

Belongs to the uroporphyrinogen decarboxylase family. As to quaternary structure, homodimer.

It localises to the cytoplasm. It catalyses the reaction uroporphyrinogen III + 4 H(+) = coproporphyrinogen III + 4 CO2. Its pathway is porphyrin-containing compound metabolism; protoporphyrin-IX biosynthesis; coproporphyrinogen-III from 5-aminolevulinate: step 4/4. Catalyzes the decarboxylation of four acetate groups of uroporphyrinogen-III to yield coproporphyrinogen-III. The sequence is that of Uroporphyrinogen decarboxylase from Bacillus mycoides (strain KBAB4) (Bacillus weihenstephanensis).